The primary structure comprises 367 residues: Tetraprenyl-beta-curcumene synthase (367 aa).

Belongs to the large terpene synthase family.

It catalyses the reaction all-trans-heptaprenyl diphosphate = (R)-tetraprenyl-beta-curcumene + diphosphate. Catalyzes the transformation of a linear C35 prenyl diphosphate chain to form tetraprenyl-beta-curcumene. In Bacillus subtilis (strain 168), this protein is Tetraprenyl-beta-curcumene synthase (ytpB).